The chain runs to 425 residues: Trigger factor (425 aa).

In terms of domain architecture, PPIase FKBP-type spans G158–P231.

Belongs to the FKBP-type PPIase family. Tig subfamily.

It is found in the cytoplasm. It carries out the reaction [protein]-peptidylproline (omega=180) = [protein]-peptidylproline (omega=0). Its function is as follows. Involved in protein export. Acts as a chaperone by maintaining the newly synthesized protein in an open conformation. Functions as a peptidyl-prolyl cis-trans isomerase. This is Trigger factor from Thermotoga petrophila (strain ATCC BAA-488 / DSM 13995 / JCM 10881 / RKU-1).